The sequence spans 593 residues: Proline--tRNA ligase (593 aa).

It belongs to the class-II aminoacyl-tRNA synthetase family. ProS type 1 subfamily. In terms of assembly, homodimer.

It is found in the cytoplasm. It carries out the reaction tRNA(Pro) + L-proline + ATP = L-prolyl-tRNA(Pro) + AMP + diphosphate. Its function is as follows. Catalyzes the attachment of proline to tRNA(Pro) in a two-step reaction: proline is first activated by ATP to form Pro-AMP and then transferred to the acceptor end of tRNA(Pro). As ProRS can inadvertently accommodate and process non-cognate amino acids such as alanine and cysteine, to avoid such errors it has two additional distinct editing activities against alanine. One activity is designated as 'pretransfer' editing and involves the tRNA(Pro)-independent hydrolysis of activated Ala-AMP. The other activity is designated 'posttransfer' editing and involves deacylation of mischarged Ala-tRNA(Pro). The misacylated Cys-tRNA(Pro) is not edited by ProRS. This is Proline--tRNA ligase from Synechococcus sp. (strain CC9902).